We begin with the raw amino-acid sequence, 806 residues long: NADH:(hydroxy)cinnamate reductase subunit CrdB (806 aa).

S257 is modified (FMN phosphoryl serine). Residues A310, E329, N337, T338, G342, G343, and D576 each coordinate FAD. R635 (proton donor) is an active-site residue. 4 residues coordinate FAD: H742, E771, A786, and L787.

The protein belongs to the FAD-dependent oxidoreductase 2 family. FRD/SDH subfamily. As to quaternary structure, NADH:(hydroxy)cinnamate reductase Crd is a heterodimer composed of CrdA and CrdB subunits, encoded by adjacent genes. FAD is required as a cofactor. It depends on FMN as a cofactor. Post-translationally, is flavinylated on Ser-257 by ApbE, encoded in a neighboring gene. Covalent attachment of FMN is essential for catalytic activity.

The catalysed reaction is 3-phenylpropanoate + NAD(+) = (E)-cinnamate + NADH + H(+). It carries out the reaction 3-(3,4-dihydroxyphenyl)propanoate + NAD(+) = (E)-caffeate + NADH + H(+). The enzyme catalyses phloretate + NAD(+) = (E)-4-coumarate + NADH + H(+). It catalyses the reaction dihydroferulate + NAD(+) = (E)-ferulate + NADH + H(+). Is inactivated by molecular oxygen, allowing regulation of Crd activity by medium oxygen level. In terms of biological role, component of the NADH:(hydroxy)cinnamate reductase Crd that catalyzes the reduction of the double bond in cinnamate, p-coumarate, caffeate, and ferulate under anaerobic conditions with NADH or methyl viologen as the electron donor. Is moderately active against acrylate and practically inactive against urocanate, fumarate, methacrylate and crotonate. CrdB is the catalytic subunit that binds substrates. Is likely involved in protecting V.ruber from (hydroxy)cinnamate poisoning. This is NADH:(hydroxy)cinnamate reductase subunit CrdB from Vibrio ruber (strain DSM 16370 / JCM 11486 / BCRC 17186 / CECT 7878 / LMG 23124 / VR1).